Here is a 413-residue protein sequence, read N- to C-terminus: Palmitoyl-acyl carrier protein thioesterase, chloroplastic (413 aa).

A chloroplast-targeting transit peptide spans 1 to 57 (MVATAVTSAFFPVTSSPDSSDSKNKKLGSIKSKPSVSSGSLQVKANAQAPPKINGTV). The segment at 12–79 (PVTSSPDSSD…DGASSPPPRT (68 aa)) is disordered. Residues 29-40 (SIKSKPSVSSGS) are compositionally biased toward low complexity. Active-site residues include asparagine 310, histidine 312, and cysteine 347. A disordered region spans residues 394 to 413 (WRPKHAKSSANMDQITAKRA).

Belongs to the acyl-ACP thioesterase family.

It localises to the plastid. The protein resides in the chloroplast. It catalyses the reaction hexadecanoyl-[ACP] + H2O = hexadecanoate + holo-[ACP] + H(+). Plays an essential role in chain termination during de novo fatty acid synthesis. High thioesterase activity for palmitoyl-ACP versus other acyl-ACPs. The chain is Palmitoyl-acyl carrier protein thioesterase, chloroplastic (FATB1) from Gossypium hirsutum (Upland cotton).